Here is a 558-residue protein sequence, read N- to C-terminus: uncharacterized protein (558 aa).

Positions 47-78 form a coiled coil; the sequence is DFDDLNSIFKDFQKQKKNLKDNILKFYNKKKE. Disordered regions lie at residues 239-266 and 424-447; these read NNNN…SKIE and NNNN…NSGE. Over residues 245–266 the composition is skewed to basic and acidic residues; that stretch reads TETESEIESKSESESESESKIE. Residues 424–444 are compositionally biased toward low complexity; it reads NNNNNNNNNNNNNNNNNNNNN.

This is an uncharacterized protein from Dictyostelium discoideum (Social amoeba).